We begin with the raw amino-acid sequence, 80 residues long: Exodeoxyribonuclease 7 small subunit (80 aa).

It belongs to the XseB family. As to quaternary structure, heterooligomer composed of large and small subunits.

It is found in the cytoplasm. The enzyme catalyses Exonucleolytic cleavage in either 5'- to 3'- or 3'- to 5'-direction to yield nucleoside 5'-phosphates.. In terms of biological role, bidirectionally degrades single-stranded DNA into large acid-insoluble oligonucleotides, which are then degraded further into small acid-soluble oligonucleotides. The protein is Exodeoxyribonuclease 7 small subunit of Oleidesulfovibrio alaskensis (strain ATCC BAA-1058 / DSM 17464 / G20) (Desulfovibrio alaskensis).